The chain runs to 232 residues: Ribose-5-phosphate isomerase A (232 aa).

Substrate contacts are provided by residues 31–34 (TGST), 87–90 (DGAD), and 100–103 (KGGG). Catalysis depends on glutamate 109, which acts as the Proton acceptor. Lysine 127 contacts substrate.

The protein belongs to the ribose 5-phosphate isomerase family. In terms of assembly, homodimer.

It catalyses the reaction aldehydo-D-ribose 5-phosphate = D-ribulose 5-phosphate. It functions in the pathway carbohydrate degradation; pentose phosphate pathway; D-ribose 5-phosphate from D-ribulose 5-phosphate (non-oxidative stage): step 1/1. In terms of biological role, catalyzes the reversible conversion of ribose-5-phosphate to ribulose 5-phosphate. The sequence is that of Ribose-5-phosphate isomerase A from Bifidobacterium longum (strain NCC 2705).